A 506-amino-acid polypeptide reads, in one-letter code: Lysine--tRNA ligase (506 aa).

Mg(2+) is bound by residues Glu-411 and Glu-418.

The protein belongs to the class-II aminoacyl-tRNA synthetase family. As to quaternary structure, homodimer. It depends on Mg(2+) as a cofactor.

It is found in the cytoplasm. The catalysed reaction is tRNA(Lys) + L-lysine + ATP = L-lysyl-tRNA(Lys) + AMP + diphosphate. The sequence is that of Lysine--tRNA ligase from Thermosynechococcus vestitus (strain NIES-2133 / IAM M-273 / BP-1).